Reading from the N-terminus, the 244-residue chain is tRNA pseudouridine synthase A (244 aa).

Asp-52 serves as the catalytic Nucleophile. A substrate-binding site is contributed by Tyr-110.

Belongs to the tRNA pseudouridine synthase TruA family. In terms of assembly, homodimer.

It catalyses the reaction uridine(38/39/40) in tRNA = pseudouridine(38/39/40) in tRNA. In terms of biological role, formation of pseudouridine at positions 38, 39 and 40 in the anticodon stem and loop of transfer RNAs. This Geotalea uraniireducens (strain Rf4) (Geobacter uraniireducens) protein is tRNA pseudouridine synthase A.